The primary structure comprises 206 residues: uncharacterized protein (206 aa).

Disordered regions lie at residues 38–88 and 160–206; these read RLQQ…NKNA and HQNT…SVQE. Over residues 40-73 the composition is skewed to low complexity; the sequence is QQQQQQQQQQQQNRTASSLQQPQQQQPISPPLFL. S68 carries the post-translational modification Phosphoserine. Polar residues predominate over residues 78-88; sequence TSENSNLNKNA. Low complexity predominate over residues 165 to 186; sequence SSSNPGSMSSSPPNSASSIFNS. A compositionally biased stretch (polar residues) spans 192 to 206; sequence PYTSQSFNPLESVQE.

The protein resides in the cytoplasm. This is an uncharacterized protein from Saccharomyces cerevisiae (strain ATCC 204508 / S288c) (Baker's yeast).